The chain runs to 294 residues: uncharacterized protein (294 aa).

The protein belongs to the glycosyltransferase 2 family. WaaE/KdtX subfamily.

This is an uncharacterized protein from Rickettsia bellii (strain RML369-C).